The following is a 261-amino-acid chain: Syntaxin-7 (261 aa).

S2 is subject to N-acetylserine. Residues 2–238 (SYTPGIGGDP…NYQRKSRKTL (237 aa)) lie on the Cytoplasmic side of the membrane. The residue at position 4 (T4) is a Phosphothreonine. Positions 47–68 (ELRQQLQQEQQYTNQLAKETDK) form a coiled coil. The residue at position 79 (T79) is a Phosphothreonine. 4 positions are modified to phosphoserine: S125, S126, S129, and S205. The disordered stretch occupies residues 128–148 (VSGGFPEDSSKEKNFVSWESQ). One can recognise a t-SNARE coiled-coil homology domain in the interval 165-227 (LRLIHERESS…QQANQQLSRA (63 aa)). Residues 239 to 259 (CIIILILVVGIVIIFFIVWGL) traverse the membrane as a helical; Anchor for type IV membrane protein segment. Residues 260-261 (KG) lie on the Vesicular side of the membrane.

It belongs to the syntaxin family. Interacts with VPS11, VPS16 and VPS18. Interacts with VPS33A. Forms a SNARE complex with VTI1B, STX8 and VAMP8 which functions in the homotypic fusion of late endosomes. Component of the SNARE complex composed of STX7, STX8, VAMP7 and VTI1B that is required for heterotypic fusion of late endosomes with lysosomes. Interacts with TPC1. Detected in all tissues tested. Highest expression is found in kidney followed by lung, spleen, heart and brain. Lower expression, in skeletal muscle, liver and testis.

It localises to the early endosome membrane. Functionally, may be involved in protein trafficking from the plasma membrane to the early endosome (EE) as well as in homotypic fusion of endocytic organelles. Mediates the endocytic trafficking from early endosomes to late endosomes and lysosomes. The polypeptide is Syntaxin-7 (Stx7) (Rattus norvegicus (Rat)).